The sequence spans 256 residues: Small ribosomal subunit protein eS1 (256 aa).

The segment covering 1–18 (MAVGKNKRLSKGKKGLKK) has biased composition (basic residues). The disordered stretch occupies residues 1-20 (MAVGKNKRLSKGKKGLKKRT). At A2 the chain carries N-acetylalanine; partial.

This sequence belongs to the eukaryotic ribosomal protein eS1 family. In terms of assembly, component of the small ribosomal subunit. Mature ribosomes consist of a small (40S) and a large (60S) subunit. The 40S subunit contains about 33 different proteins and 1 molecule of RNA (18S). The 60S subunit contains about 49 different proteins and 3 molecules of RNA (25S, 5.8S and 5S).

It is found in the cytoplasm. The sequence is that of Small ribosomal subunit protein eS1 (rps1) from Talaromyces stipitatus (strain ATCC 10500 / CBS 375.48 / QM 6759 / NRRL 1006) (Penicillium stipitatum).